Here is a 160-residue protein sequence, read N- to C-terminus: Large ribosomal subunit protein uL16 (160 aa).

Residues 138–160 are disordered; it reads INLSSDSSGEGKTGKDSKEEVKK. A compositionally biased stretch (basic and acidic residues) spans 149 to 160; the sequence is KTGKDSKEEVKK.

The protein belongs to the universal ribosomal protein uL16 family. Part of the 50S ribosomal subunit.

Functionally, binds 23S rRNA and is also seen to make contacts with the A and possibly P site tRNAs. This is Large ribosomal subunit protein uL16 from Prochlorococcus marinus subsp. pastoris (strain CCMP1986 / NIES-2087 / MED4).